We begin with the raw amino-acid sequence, 203 residues long: Nucleoside triphosphate pyrophosphatase (203 aa).

The Proton acceptor role is filled by aspartate 80.

This sequence belongs to the Maf family. The cofactor is a divalent metal cation.

Its subcellular location is the cytoplasm. The enzyme catalyses a ribonucleoside 5'-triphosphate + H2O = a ribonucleoside 5'-phosphate + diphosphate + H(+). It catalyses the reaction a 2'-deoxyribonucleoside 5'-triphosphate + H2O = a 2'-deoxyribonucleoside 5'-phosphate + diphosphate + H(+). In terms of biological role, nucleoside triphosphate pyrophosphatase. May have a dual role in cell division arrest and in preventing the incorporation of modified nucleotides into cellular nucleic acids. This Gluconobacter oxydans (strain 621H) (Gluconobacter suboxydans) protein is Nucleoside triphosphate pyrophosphatase.